A 241-amino-acid chain; its full sequence is Ribonuclease PH (241 aa).

Phosphate-binding positions include Arg-86 and 124–126 (GTR).

Belongs to the RNase PH family. As to quaternary structure, homohexameric ring arranged as a trimer of dimers.

The catalysed reaction is tRNA(n+1) + phosphate = tRNA(n) + a ribonucleoside 5'-diphosphate. Functionally, phosphorolytic 3'-5' exoribonuclease that plays an important role in tRNA 3'-end maturation. Removes nucleotide residues following the 3'-CCA terminus of tRNAs; can also add nucleotides to the ends of RNA molecules by using nucleoside diphosphates as substrates, but this may not be physiologically important. Probably plays a role in initiation of 16S rRNA degradation (leading to ribosome degradation) during starvation. In Hamiltonella defensa subsp. Acyrthosiphon pisum (strain 5AT), this protein is Ribonuclease PH.